A 291-amino-acid chain; its full sequence is UPF0276 protein VV1_0952 (291 aa).

Belongs to the UPF0276 family.

This Vibrio vulnificus (strain CMCP6) protein is UPF0276 protein VV1_0952.